The following is a 269-amino-acid chain: 3-methyl-2-oxobutanoate hydroxymethyltransferase (269 aa).

Residues Asp-50 and Asp-89 each coordinate Mg(2+). Residues 50–51 (DS), Asp-89, and Lys-118 contribute to the 3-methyl-2-oxobutanoate site. Glu-120 is a binding site for Mg(2+). Catalysis depends on Glu-187, which acts as the Proton acceptor.

Belongs to the PanB family. As to quaternary structure, homodecamer; pentamer of dimers. It depends on Mg(2+) as a cofactor.

It is found in the cytoplasm. The enzyme catalyses 3-methyl-2-oxobutanoate + (6R)-5,10-methylene-5,6,7,8-tetrahydrofolate + H2O = 2-dehydropantoate + (6S)-5,6,7,8-tetrahydrofolate. Its pathway is cofactor biosynthesis; (R)-pantothenate biosynthesis; (R)-pantoate from 3-methyl-2-oxobutanoate: step 1/2. Its function is as follows. Catalyzes the reversible reaction in which hydroxymethyl group from 5,10-methylenetetrahydrofolate is transferred onto alpha-ketoisovalerate to form ketopantoate. In Nitrosomonas europaea (strain ATCC 19718 / CIP 103999 / KCTC 2705 / NBRC 14298), this protein is 3-methyl-2-oxobutanoate hydroxymethyltransferase.